The following is a 196-amino-acid chain: Putative manganese efflux pump MntP (196 aa).

Transmembrane regions (helical) follow at residues Pro-3–Gly-23, Ile-39–His-59, Gly-67–Ala-87, Ile-109–Thr-129, Ile-137–Leu-157, and Ile-172–Gly-192.

It belongs to the MntP (TC 9.B.29) family.

Its subcellular location is the cell inner membrane. Functionally, probably functions as a manganese efflux pump. The polypeptide is Putative manganese efflux pump MntP (Chromohalobacter salexigens (strain ATCC BAA-138 / DSM 3043 / CIP 106854 / NCIMB 13768 / 1H11)).